The primary structure comprises 72 residues: Translation initiation factor IF-1 (72 aa).

Residues M1–K72 form the S1-like domain.

This sequence belongs to the IF-1 family. In terms of assembly, component of the 30S ribosomal translation pre-initiation complex which assembles on the 30S ribosome in the order IF-2 and IF-3, IF-1 and N-formylmethionyl-tRNA(fMet); mRNA recruitment can occur at any time during PIC assembly.

The protein resides in the cytoplasm. Functionally, one of the essential components for the initiation of protein synthesis. Stabilizes the binding of IF-2 and IF-3 on the 30S subunit to which N-formylmethionyl-tRNA(fMet) subsequently binds. Helps modulate mRNA selection, yielding the 30S pre-initiation complex (PIC). Upon addition of the 50S ribosomal subunit IF-1, IF-2 and IF-3 are released leaving the mature 70S translation initiation complex. This is Translation initiation factor IF-1 from Gluconacetobacter diazotrophicus (strain ATCC 49037 / DSM 5601 / CCUG 37298 / CIP 103539 / LMG 7603 / PAl5).